A 596-amino-acid polypeptide reads, in one-letter code: Protein NRT1/ PTR FAMILY 3.1 (596 aa).

Residues 1–16 (MEEQSKNKISEEEKQL) are compositionally biased toward basic and acidic residues. The tract at residues 1 to 23 (MEEQSKNKISEEEKQLHGRPNRP) is disordered. 12 helical membrane-spanning segments follow: residues 27–47 (LITMPFIFANEICEKLAVVGF), 73–93 (FAGTSSLTPLLGAFIADSFAG), 98–118 (ITFASIIYQIGMTLLTISAII), 137–157 (TAQLSILYVALLLGALGSGGI), 185–205 (NWYYFCMGAAVLLAVTVLVWI), 213–233 (LGLGIPTVAMFLSVIAFVGGF), 334–354 (MGPIGASGILLITAYAQQGTF), 372–392 (IPAGSMSVFTTVAMLTTIIFY), 416–436 (MGIGFVISIIATLVAGFVEVK), 453–473 (IVPISFLWLIPQYGLHGVAEA), 497–517 (ALFWMAISIGNYVSTLLVTLV), and 542–562 (YFYWLITVLQAVNLVYYLWCA).

Belongs to the major facilitator superfamily. Proton-dependent oligopeptide transporter (POT/PTR) (TC 2.A.17) family. As to expression, expressed in shoots, stems, leaves, flowers and siliques.

It is found in the membrane. In terms of biological role, may act as an efflux-type nitrite transporter. Not regulated by the PII protein involved in the regulation of nitrite uptake into higher plant chloroplasts. This is Protein NRT1/ PTR FAMILY 3.1 (NPF3.1) from Arabidopsis thaliana (Mouse-ear cress).